A 342-amino-acid chain; its full sequence is Isopentenyl-diphosphate delta-isomerase (342 aa).

11–12 provides a ligand contact to substrate; it reads RK. FMN-binding positions include serine 68, 69–71, serine 99, and asparagine 127; that span reads SMT. 99-101 serves as a coordination point for substrate; it reads SMR. Glutamine 162 provides a ligand contact to substrate. Glutamate 163 serves as a coordination point for Mg(2+). Residues lysine 194, threonine 224, 274–276, and 295–296 each bind FMN; these read GLK and AG.

The protein belongs to the IPP isomerase type 2 family. Homooctamer. Dimer of tetramers. The cofactor is FMN. Requires NADPH as cofactor. It depends on Mg(2+) as a cofactor.

It is found in the cytoplasm. The enzyme catalyses isopentenyl diphosphate = dimethylallyl diphosphate. In terms of biological role, involved in the biosynthesis of isoprenoids. Catalyzes the 1,3-allylic rearrangement of the homoallylic substrate isopentenyl (IPP) to its allylic isomer, dimethylallyl diphosphate (DMAPP). This Rickettsia africae (strain ESF-5) protein is Isopentenyl-diphosphate delta-isomerase.